We begin with the raw amino-acid sequence, 197 residues long: FMN-dependent NADH:quinone oxidoreductase (197 aa).

FMN-binding positions include S10 and 16–18 (SIS).

Belongs to the azoreductase type 1 family. Homodimer. FMN is required as a cofactor.

The enzyme catalyses 2 a quinone + NADH + H(+) = 2 a 1,4-benzosemiquinone + NAD(+). The catalysed reaction is N,N-dimethyl-1,4-phenylenediamine + anthranilate + 2 NAD(+) = 2-(4-dimethylaminophenyl)diazenylbenzoate + 2 NADH + 2 H(+). In terms of biological role, quinone reductase that provides resistance to thiol-specific stress caused by electrophilic quinones. Also exhibits azoreductase activity. Catalyzes the reductive cleavage of the azo bond in aromatic azo compounds to the corresponding amines. This Erythrobacter litoralis (strain HTCC2594) protein is FMN-dependent NADH:quinone oxidoreductase.